Here is a 150-residue protein sequence, read N- to C-terminus: Protein-export protein SecB (150 aa).

This sequence belongs to the SecB family. As to quaternary structure, homotetramer, a dimer of dimers. One homotetramer interacts with 1 SecA dimer.

The protein resides in the cytoplasm. Functionally, one of the proteins required for the normal export of preproteins out of the cell cytoplasm. It is a molecular chaperone that binds to a subset of precursor proteins, maintaining them in a translocation-competent state. It also specifically binds to its receptor SecA. In Chromobacterium violaceum (strain ATCC 12472 / DSM 30191 / JCM 1249 / CCUG 213 / NBRC 12614 / NCIMB 9131 / NCTC 9757 / MK), this protein is Protein-export protein SecB.